The following is a 258-amino-acid chain: Imidazole glycerol phosphate synthase subunit HisF (258 aa).

Active-site residues include D11 and D130.

Belongs to the HisA/HisF family. As to quaternary structure, heterodimer of HisH and HisF.

The protein localises to the cytoplasm. It carries out the reaction 5-[(5-phospho-1-deoxy-D-ribulos-1-ylimino)methylamino]-1-(5-phospho-beta-D-ribosyl)imidazole-4-carboxamide + L-glutamine = D-erythro-1-(imidazol-4-yl)glycerol 3-phosphate + 5-amino-1-(5-phospho-beta-D-ribosyl)imidazole-4-carboxamide + L-glutamate + H(+). Its pathway is amino-acid biosynthesis; L-histidine biosynthesis; L-histidine from 5-phospho-alpha-D-ribose 1-diphosphate: step 5/9. Functionally, IGPS catalyzes the conversion of PRFAR and glutamine to IGP, AICAR and glutamate. The HisF subunit catalyzes the cyclization activity that produces IGP and AICAR from PRFAR using the ammonia provided by the HisH subunit. This chain is Imidazole glycerol phosphate synthase subunit HisF, found in Cronobacter sakazakii (strain ATCC BAA-894) (Enterobacter sakazakii).